The primary structure comprises 131 residues: Small ribosomal subunit protein uS11 (131 aa).

It belongs to the universal ribosomal protein uS11 family. As to quaternary structure, part of the 30S ribosomal subunit. Interacts with proteins S7 and S18. Binds to IF-3.

Its function is as follows. Located on the platform of the 30S subunit, it bridges several disparate RNA helices of the 16S rRNA. Forms part of the Shine-Dalgarno cleft in the 70S ribosome. The polypeptide is Small ribosomal subunit protein uS11 (Helicobacter pylori (strain G27)).